The following is a 207-amino-acid chain: Porin MspD (207 aa).

A signal peptide spans 1–24; that stretch reads MRYLVMMFALLVSVTLVSPRPANA.

The protein belongs to the mycobacterial porin (TC 1.B.24) family. Octamers. Probably forms a goblet with the wide end on the exterior of the outer membrane and a central channel. It is not known if mixed oligomers of MspD with other Msp subunits form in vivo.

The protein resides in the cell outer membrane. Its subcellular location is the secreted. The protein localises to the cell wall. A backup porin induced when MspA, the major porin, is deleted. It probably forms a water-filled channel which favors the permeation of cations. There are about 2400 porins in wild-type, 800 in an mspA deletion and 150 in a double mspA-mspC deletion. The sequence is that of Porin MspD (mspD) from Mycolicibacterium smegmatis (strain ATCC 700084 / mc(2)155) (Mycobacterium smegmatis).